A 399-amino-acid chain; its full sequence is Methylthioribose kinase (399 aa).

ATP contacts are provided by residues N40, K57, and 111 to 113 (EDL). Residue D229 coordinates substrate. Residue 246 to 248 (DAE) coordinates ATP. R344 is a substrate binding site.

It belongs to the methylthioribose kinase family. Homodimer.

The catalysed reaction is 5-(methylsulfanyl)-D-ribose + ATP = 5-(methylsulfanyl)-alpha-D-ribose 1-phosphate + ADP + H(+). It functions in the pathway amino-acid biosynthesis; L-methionine biosynthesis via salvage pathway; S-methyl-5-thio-alpha-D-ribose 1-phosphate from S-methyl-5'-thioadenosine (hydrolase route): step 2/2. In terms of biological role, catalyzes the phosphorylation of methylthioribose into methylthioribose-1-phosphate. The polypeptide is Methylthioribose kinase (Enterobacter sp. (strain 638)).